We begin with the raw amino-acid sequence, 151 residues long: SsrA-binding protein (151 aa).

Positions 132 to 151 are disordered; sequence KRQTIKKRDQDREIHRKYGI.

This sequence belongs to the SmpB family.

The protein resides in the cytoplasm. Required for rescue of stalled ribosomes mediated by trans-translation. Binds to transfer-messenger RNA (tmRNA), required for stable association of tmRNA with ribosomes. tmRNA and SmpB together mimic tRNA shape, replacing the anticodon stem-loop with SmpB. tmRNA is encoded by the ssrA gene; the 2 termini fold to resemble tRNA(Ala) and it encodes a 'tag peptide', a short internal open reading frame. During trans-translation Ala-aminoacylated tmRNA acts like a tRNA, entering the A-site of stalled ribosomes, displacing the stalled mRNA. The ribosome then switches to translate the ORF on the tmRNA; the nascent peptide is terminated with the 'tag peptide' encoded by the tmRNA and targeted for degradation. The ribosome is freed to recommence translation, which seems to be the essential function of trans-translation. This is SsrA-binding protein from Lactobacillus johnsonii (strain CNCM I-12250 / La1 / NCC 533).